We begin with the raw amino-acid sequence, 152 residues long: Transcriptional regulator MraZ (152 aa).

SpoVT-AbrB domains follow at residues 5–52 (ATLV…PLPE) and 81–124 (ASEC…DETT).

This sequence belongs to the MraZ family. In terms of assembly, forms oligomers.

It is found in the cytoplasm. It localises to the nucleoid. In terms of biological role, negatively regulates its own expression and that of the subsequent genes in the proximal part of the division and cell wall (dcw) gene cluster. Acts by binding directly to DNA. May also regulate the expression of genes outside the dcw cluster. The sequence is that of Transcriptional regulator MraZ from Escherichia fergusonii (strain ATCC 35469 / DSM 13698 / CCUG 18766 / IAM 14443 / JCM 21226 / LMG 7866 / NBRC 102419 / NCTC 12128 / CDC 0568-73).